Here is a 157-residue protein sequence, read N- to C-terminus: Prefoldin subunit alpha (157 aa).

It belongs to the prefoldin subunit alpha family. Heterohexamer of two alpha and four beta subunits.

It localises to the cytoplasm. Its function is as follows. Molecular chaperone capable of stabilizing a range of proteins. Seems to fulfill an ATP-independent, HSP70-like function in archaeal de novo protein folding. This chain is Prefoldin subunit alpha, found in Methanopyrus kandleri (strain AV19 / DSM 6324 / JCM 9639 / NBRC 100938).